The following is a 488-amino-acid chain: Proline--tRNA ligase (488 aa).

The protein belongs to the class-II aminoacyl-tRNA synthetase family. ProS type 3 subfamily. In terms of assembly, homodimer.

Its subcellular location is the cytoplasm. It catalyses the reaction tRNA(Pro) + L-proline + ATP = L-prolyl-tRNA(Pro) + AMP + diphosphate. In terms of biological role, catalyzes the attachment of proline to tRNA(Pro) in a two-step reaction: proline is first activated by ATP to form Pro-AMP and then transferred to the acceptor end of tRNA(Pro). This Pyrobaculum islandicum (strain DSM 4184 / JCM 9189 / GEO3) protein is Proline--tRNA ligase.